Reading from the N-terminus, the 99-residue chain is NADH-ubiquinone oxidoreductase chain 4L (99 aa).

3 helical membrane-spanning segments follow: residues 5-25, 30-50, and 65-85; these read IITA…GFII, ILLL…IIIC, and LYIL…LVLF.

It belongs to the complex I subunit 4L family.

It is found in the mitochondrion membrane. It carries out the reaction a ubiquinone + NADH + 5 H(+)(in) = a ubiquinol + NAD(+) + 4 H(+)(out). In terms of biological role, core subunit of the mitochondrial membrane respiratory chain NADH dehydrogenase (Complex I) that is believed to belong to the minimal assembly required for catalysis. Complex I functions in the transfer of electrons from NADH to the respiratory chain. The immediate electron acceptor for the enzyme is believed to be ubiquinone. This chain is NADH-ubiquinone oxidoreductase chain 4L (ND4L), found in Allomyces macrogynus.